We begin with the raw amino-acid sequence, 311 residues long: Aspartate carbamoyltransferase catalytic subunit (311 aa).

Carbamoyl phosphate-binding residues include R55 and T56. K85 provides a ligand contact to L-aspartate. Residues R106, H135, and Q138 each coordinate carbamoyl phosphate. 2 residues coordinate L-aspartate: R168 and R230. Residues L268 and P269 each contribute to the carbamoyl phosphate site.

This sequence belongs to the aspartate/ornithine carbamoyltransferase superfamily. ATCase family. As to quaternary structure, heterododecamer (2C3:3R2) of six catalytic PyrB chains organized as two trimers (C3), and six regulatory PyrI chains organized as three dimers (R2).

The catalysed reaction is carbamoyl phosphate + L-aspartate = N-carbamoyl-L-aspartate + phosphate + H(+). It functions in the pathway pyrimidine metabolism; UMP biosynthesis via de novo pathway; (S)-dihydroorotate from bicarbonate: step 2/3. Functionally, catalyzes the condensation of carbamoyl phosphate and aspartate to form carbamoyl aspartate and inorganic phosphate, the committed step in the de novo pyrimidine nucleotide biosynthesis pathway. This Salmonella paratyphi A (strain AKU_12601) protein is Aspartate carbamoyltransferase catalytic subunit.